Here is a 643-residue protein sequence, read N- to C-terminus: Protein disulfide-isomerase A4 (643 aa).

Residues 1–20 (MKLRKAWLLVLLLALTQLLA) form the signal peptide. Thioredoxin domains are found at residues 21 to 167 (AASA…EVSQ) and 167 to 299 (QPDW…EFLK). The interval 24-58 (AEDAHEDASDSENPIEDDDDEEEDEEDEDDLEVKE) is disordered. Positions 32 to 56 (SDSENPIEDDDDEEEDEEDEDDLEV) are enriched in acidic residues. A CXXC motif is present at residues 89–92 (CGHC). Cystine bridges form between Cys-89-Cys-92 and Cys-204-Cys-207. The residue at position 364 (Lys-364) is an N6-acetyllysine. One can recognise a Thioredoxin 3 domain in the interval 503-634 (FKKGKLKPVI…LSKFIDEHAT (132 aa)). Positions 553 to 556 (CGHC) match the CXXC motif. Cys-553 and Cys-556 are oxidised to a cystine. A Prevents secretion from ER motif is present at residues 640–643 (KEEL).

Belongs to the protein disulfide isomerase family. In terms of assembly, part of a large chaperone multiprotein complex comprising DNAJB11, HSP90B1, HSPA5, HYOU, PDIA2, PDIA4, PDIA6, PPIB, SDF2L1, UGGT1 and very small amounts of ERP29, but not, or at very low levels, CALR nor CANX. Component of a complex containing at least CRELD2, MANF, MATN3 and PDIA4. Post-translationally, O-glycosylated.

It localises to the endoplasmic reticulum lumen. The protein localises to the melanosome. It catalyses the reaction Catalyzes the rearrangement of -S-S- bonds in proteins.. This chain is Protein disulfide-isomerase A4 (Pdia4), found in Rattus norvegicus (Rat).